A 749-amino-acid chain; its full sequence is Protein SEY1 homolog 2 (749 aa).

The Cytoplasmic portion of the chain corresponds to 1–671 (MIKNYGDRYH…QKHKQDFLQN (671 aa)). In terms of domain architecture, GB1/RHD3-type G spans 40–265 (GKNYNIVSII…YEKNVRWSDM (226 aa)). Position 50–57 (50–57 (GSQSTGKS)) interacts with GTP. The stretch at 445-465 (NQLKAFVEAQLATFKQQLDNI) forms a coiled coil. Residues 672–692 (IPKPFWFLLLFFMYDDVLRWM) form a helical membrane-spanning segment. The Lumenal portion of the chain corresponds to 693–695 (GNP). A helical membrane pass occupies residues 696 to 716 (LFLYPILIILCFVGFCIAIGL). Topologically, residues 717–749 (HSLPKLAFQWVFRTLNQAVIPIIFGGISKLKGS) are cytoplasmic.

This sequence belongs to the TRAFAC class dynamin-like GTPase superfamily. GB1/RHD3 GTPase family. RHD3 subfamily.

Its subcellular location is the endoplasmic reticulum membrane. Probable GTP-binding protein that may be involved in cell development. This chain is Protein SEY1 homolog 2, found in Paramecium tetraurelia.